A 411-amino-acid chain; its full sequence is Acetyl-coenzyme A carboxylase carboxyl transferase subunit beta, chloroplastic (411 aa).

In terms of domain architecture, CoA carboxyltransferase N-terminal spans 32–302 (LWTRCDHCGV…KEQGRIPYGE (271 aa)). The Zn(2+) site is built by Cys36, Cys39, Cys55, and Cys58. The C4-type zinc finger occupies 36–58 (CDHCGVILYIKHLKENQRVCFGC).

The protein belongs to the AccD/PCCB family. In terms of assembly, acetyl-CoA carboxylase is a heterohexamer composed of biotin carboxyl carrier protein, biotin carboxylase and 2 subunits each of ACCase subunit alpha and ACCase plastid-coded subunit beta (accD). Zn(2+) serves as cofactor.

It localises to the plastid. The protein localises to the chloroplast stroma. It carries out the reaction N(6)-carboxybiotinyl-L-lysyl-[protein] + acetyl-CoA = N(6)-biotinyl-L-lysyl-[protein] + malonyl-CoA. It functions in the pathway lipid metabolism; malonyl-CoA biosynthesis; malonyl-CoA from acetyl-CoA: step 1/1. Functionally, component of the acetyl coenzyme A carboxylase (ACC) complex. Biotin carboxylase (BC) catalyzes the carboxylation of biotin on its carrier protein (BCCP) and then the CO(2) group is transferred by the transcarboxylase to acetyl-CoA to form malonyl-CoA. This Chlorella vulgaris (Green alga) protein is Acetyl-coenzyme A carboxylase carboxyl transferase subunit beta, chloroplastic.